The primary structure comprises 85 residues: uncharacterized protein (85 aa).

The N-terminal stretch at 1–19 (MKTIFTVGAVVLATCLLSG) is a signal peptide. Cys20 is lipidated: N-palmitoyl cysteine. Cys20 carries the S-diacylglycerol cysteine lipid modification.

Its subcellular location is the cell outer membrane. This is an uncharacterized protein from Escherichia coli (strain K12).